The sequence spans 142 residues: Large ribosomal subunit protein uL13 (142 aa).

Belongs to the universal ribosomal protein uL13 family. As to quaternary structure, part of the 50S ribosomal subunit.

Its function is as follows. This protein is one of the early assembly proteins of the 50S ribosomal subunit, although it is not seen to bind rRNA by itself. It is important during the early stages of 50S assembly. This chain is Large ribosomal subunit protein uL13, found in Bordetella avium (strain 197N).